The sequence spans 2009 residues: Protein Daple (2009 aa).

Positions 11–131 constitute a Calponin-homology (CH) domain; it reads LFLQSPLVTW…KVLLLVLGCA (121 aa). Positions 221–251 are disordered; it reads QTQQPPSPGKFSSPDSTPSPTSSLSSEDKQH. Ser227 and Ser239 each carry phosphoserine. Over residues 232–245 the composition is skewed to low complexity; that stretch reads SSPDSTPSPTSSLS. 2 coiled-coil regions span residues 247 to 425 and 456 to 1008; these read EDKQ…QKQS and ELNE…TQEG. Ser486 carries the post-translational modification Phosphoserine. The segment at 1002 to 1036 is disordered; the sequence is LRQTQEGGDKAQNALKRPPGKVTSHQEKEAWEPSH. Over residues 1025–1036 the composition is skewed to basic and acidic residues; the sequence is SHQEKEAWEPSH. A coiled-coil region spans residues 1190-1384; sequence HRNLELEHKE…LEEKIMDQYK (195 aa). Residues 1410–1419 show a composition bias toward basic and acidic residues; sequence KEGSRERLKS. Disordered stretches follow at residues 1410–1716 and 1757–1787; these read KEGS…GAKM and GMPS…HMPV. Positions 1430-1439 are enriched in low complexity; that stretch reads PSDPASPSPS. A Phosphoserine modification is found at Ser1435. Polar residues predominate over residues 1440-1449; it reads QALRSQTENP. Composition is skewed to low complexity over residues 1510–1524 and 1562–1581; these read TFST…SSST and NSLE…SLKG. Position 1592 is a phosphoserine (Ser1592). A GBA motif is present at residues 1652 to 1683; sequence HSASPSSEMVTLEEFLEESNRGGSPTHDTPSC. Residues 1681 to 1697 show a composition bias toward basic and acidic residues; sequence PSCRDDLLSDYFRKAHD. The segment covering 1761–1783 has biased composition (polar residues); that stretch reads RQVQPPQSLSLGRPRQTTMTQNC. The residue at position 1798 (Ser1798) is a Phosphoserine. The interval 1808–2009 is disordered; it reads SGPEACRPES…QTVWYEYGCV (202 aa). Residues 1866-1883 are compositionally biased toward basic and acidic residues; that stretch reads RPLDTRRFSLAPPKEERL. The span at 1898 to 1911 shows a compositional bias: polar residues; that stretch reads GCSSGSNPQIQHFS. Over residues 1943–1954 the composition is skewed to gly residues; the sequence is TSEGDGGPGHGY. The span at 1981 to 1991 shows a compositional bias: polar residues; it reads SQGSSSKSTPA. The short motif at 2006 to 2009 is the PDZ-binding element; it reads YGCV. Residues 2007 to 2009 form a DVL1-binding region; it reads GCV.

The protein belongs to the CCDC88 family. In terms of assembly, homooligomer. Interacts with DVL1 (via PDZ domain); dissociates following initiation of non-canonical Wnt signaling. Interacts (via C-terminus) with ligand-activated Wnt receptor FZD7; competes with DVL1 for binding to FZD7 and displaces DVL1 from ligand-activated FZD7. Interacts (via GBA motif) with guanine nucleotide-binding protein G(i) alpha subunits GNAI1, GNAI2 and GNAI3 (inactive GDP-bound form); interacts with higher affinity with GNAI1 and GNAI3 than with GNAI2 and interaction leads to G(i) alpha subunit activation. Does not interact with GNAO1.

Its subcellular location is the cytoplasm. The protein localises to the cell junction. Required for activation of guanine nucleotide-binding proteins (G-proteins) during non-canonical Wnt signaling. Binds to ligand-activated Wnt receptor FZD7, displacing DVL1 from the FZD7 receptor and leading to inhibition of canonical Wnt signaling. Acts as a non-receptor guanine nucleotide exchange factor by also binding to guanine nucleotide-binding protein G(i) alpha (Gi-alpha) subunits, leading to their activation. Binding to Gi-alpha subunits displaces the beta and gamma subunits from the heterotrimeric G-protein complex, triggering non-canonical Wnt responses such as activation of RAC1 and PI3K-AKT signaling. Promotes apical constriction of cells via ARHGEF18. In Mus musculus (Mouse), this protein is Protein Daple (Ccdc88c).